A 352-amino-acid polypeptide reads, in one-letter code: Quinolinate synthase (352 aa).

His48 and Ser69 together coordinate iminosuccinate. Cys114 serves as a coordination point for [4Fe-4S] cluster. Iminosuccinate-binding positions include 140–142 (YAN) and Ser157. Cys201 serves as a coordination point for [4Fe-4S] cluster. Iminosuccinate-binding positions include 227-229 (HPE) and Thr244. [4Fe-4S] cluster is bound at residue Cys298.

This sequence belongs to the quinolinate synthase family. Type 1 subfamily. [4Fe-4S] cluster serves as cofactor.

Its subcellular location is the cytoplasm. The enzyme catalyses iminosuccinate + dihydroxyacetone phosphate = quinolinate + phosphate + 2 H2O + H(+). The protein operates within cofactor biosynthesis; NAD(+) biosynthesis; quinolinate from iminoaspartate: step 1/1. Catalyzes the condensation of iminoaspartate with dihydroxyacetone phosphate to form quinolinate. The protein is Quinolinate synthase of Pseudomonas syringae pv. syringae (strain B728a).